Consider the following 539-residue polypeptide: Chloride channel CLIC-like protein 1 (539 aa).

The signal sequence occupies residues 1–18 (MLCRLLLCECLLLITGYA). Topologically, residues 19–184 (HDDDWIDPTD…EDYFGVDPYN (166 aa)) are lumenal. The disordered stretch occupies residues 41 to 61 (KSQVRSGTSEKKEVSPDSSEA). Residues 185 to 205 (VFMVLLCLLCLVVLVATELWT) traverse the membrane as a helical segment. The Cytoplasmic portion of the chain corresponds to 206-215 (YVRWYTQMKR). A helical membrane pass occupies residues 216-236 (IFIISFLLSLAWNWIYLYKMA). The Lumenal segment spans residues 237 to 329 (FAQHQANIAG…GEFIKALMKE (93 aa)). The helical transmembrane segment at 330–350 (IPVLLQIPVLAILALAVLSFC) threads the bilayer. At 351–539 (YGAGRSVPML…GTEPVSSPCG (189 aa)) the chain is on the cytoplasmic side. The segment at 361–410 (RHFGGPDREPPRALEPDDRRRQKGLDYRLHGGAGDADFSYRGPAGSIEQG) is disordered. Residues 364–389 (GGPDREPPRALEPDDRRRQKGLDYRL) are compositionally biased toward basic and acidic residues. A phosphoserine mark is found at S429, S433, and S459. A disordered region spans residues 444–539 (DTEAQEHPEV…GTEPVSSPCG (96 aa)). Over residues 475-485 (STPTEYSQSAK) the composition is skewed to polar residues. T476 bears the Phosphothreonine mark. Phosphoserine is present on residues S498, S513, and S521. The span at 512–521 (CSPPGGCPPS) shows a compositional bias: low complexity.

This sequence belongs to the chloride channel MCLC family. In terms of assembly, homomultimers. Interacts with mitochondrial protein PIGBOS1 (via C-terminus); the interaction occurs at the mitochondria-associated endoplasmic reticulum (ER) membrane, a zone of contact between the ER and mitochondrial membranes, but does not appear to play a role in ER-mitochondria tethering and is not affected by ER stress. Interacts with CALR. In terms of tissue distribution, expressed in cerebellum (at protein level).

Its subcellular location is the endoplasmic reticulum membrane. The enzyme catalyses chloride(in) = chloride(out). It catalyses the reaction bromide(in) = bromide(out). The catalysed reaction is nitrate(in) = nitrate(out). It carries out the reaction fluoride(in) = fluoride(out). Activated by membrane phosphatidylinositol 4,5-bisphosphate (PI(4,5)P2, PIP2). Inhibited by lumenal Ca(2+). Functionally, anion-selective channel with Ca(2+)-dependent and voltage-independent gating. Permeable to small monovalent anions with selectivity for bromide &gt; chloride &gt; nitrate &gt; fluoride. Operates in the endoplasmic reticulum (ER) membrane where it mediates chloride efflux to compensate for the loss of positive charges from the ER lumen upon Ca(2+) release. Contributes to the maintenance of ER Ca(2+) pools and activation of unfolded protein response to prevent accumulation of misfolded proteins in the ER lumen. Particularly involved in ER homeostasis mechanisms underlying motor neurons and retinal photoreceptors survival. The polypeptide is Chloride channel CLIC-like protein 1 (Mus musculus (Mouse)).